The following is a 272-amino-acid chain: uncharacterized protein (272 aa).

Residues 1–27 form the HTH merR-type domain; the sequence is MDTLAFINRALVEEGYSLKDIKLVLIT.

This is an uncharacterized protein from Aquifex aeolicus (strain VF5).